A 739-amino-acid chain; its full sequence is Double-strand break repair protein mus-23 (739 aa).

Mn(2+) contacts are provided by D16, H18, D56, and N123. Catalysis depends on H124, which acts as the Proton donor. 3 residues coordinate Mn(2+): H212, H240, and H242. The tract at residues 516–739 (FDAGQHKQAQ…KPGLLARRLG (224 aa)) is disordered. Positions 523 to 532 (QAQRTKRFKR) are enriched in basic residues. Basic and acidic residues predominate over residues 559–568 (VEPKGNDRPT). The segment covering 599-636 (KRGAAAKTTAAAKKAAPGKKAAPAKKAAPAKKAAPAKK) has biased composition (low complexity). A compositionally biased stretch (basic residues) spans 637-646 (APARGRKKKT). Residues 650–686 (DSDEEEEEDYPEDDDEEEEEADEEEEDVIMEDDEEDP) show a composition bias toward acidic residues. A compositionally biased stretch (low complexity) spans 694–722 (KATSRVASTRASARATPVRATPARATQAR).

It belongs to the MRE11/RAD32 family. Component of the MRN complex composed of two heterodimers RAD50 and MRE11 associated with a single NBS1. Mn(2+) is required as a cofactor.

The protein localises to the nucleus. The protein resides in the chromosome. Its subcellular location is the telomere. In terms of biological role, core component of the MRN complex, which plays a central role in double-strand break (DSB) repair, DNA recombination, maintenance of telomere integrity and meiosis. The MRN complex is involved in the repair of DNA double-strand breaks (DSBs) via homologous recombination (HR), an error-free mechanism which primarily occurs during S and G2 phases. The complex (1) mediates the end resection of damaged DNA, which generates proper single-stranded DNA, a key initial steps in HR, and is (2) required for the recruitment of other repair factors and efficient activation of ATM and ATR upon DNA damage. Within the MRN complex, MRE11 possesses both single-strand endonuclease activity and double-strand-specific 3'-5' exonuclease activity. MRE11 first endonucleolytically cleaves the 5' strand at DNA DSB ends to prevent non-homologous end joining (NHEJ) and licence HR. It then generates a single-stranded DNA gap via 3' to 5' exonucleolytic degradation, which is required for single-strand invasion and recombination. The MRN complex is also required for the processing of R-loops. This is Double-strand break repair protein mus-23 (mus-23) from Neurospora crassa (strain ATCC 24698 / 74-OR23-1A / CBS 708.71 / DSM 1257 / FGSC 987).